The sequence spans 428 residues: MSKNIQAIRGMNDILPEQTPLWRYFEKSVAGLLDGYGYRQIRMPIVEFTELFKRSIGEVTDIVEKEMYTFEDRNGDSLTLRPEGTASCVRAVLEHGISGGGQVQKLWYVGPMFRHERPQKGRYRQFHQIGVEVFNLPGPDIDAELIVLTWRLWGLLGLREAVTLELNSLGSSEARARYREALVEYLSARFERLDEDSQRRLSSNPLRILDSKNPETQALLVDAPKLADYLDEDSRQHFEGLKARLDVAGIPYVINPKLVRGLDYYGKTVFEWVTDKLGAQGTVCAGGRYDGLVEQLGGKPTPAVGFAMGVERLVLLLETLERVPAELSRQVDVYFCAFGEAAELAALGLAERLRDALPGLRLAVNAGAGSFKSQLKKADKSGALYALVLGEDELAGRIVGLKSLRAEGEQQSVGWDELGERLAACLRA.

It belongs to the class-II aminoacyl-tRNA synthetase family. As to quaternary structure, homodimer.

The protein localises to the cytoplasm. The enzyme catalyses tRNA(His) + L-histidine + ATP = L-histidyl-tRNA(His) + AMP + diphosphate + H(+). The chain is Histidine--tRNA ligase from Azotobacter vinelandii (strain DJ / ATCC BAA-1303).